A 367-amino-acid polypeptide reads, in one-letter code: Forkhead box protein I2-B (367 aa).

The segment covering 31-40 has biased composition (low complexity); sequence QQQNQQLPQR. The interval 31-51 is disordered; sequence QQQNQQLPQRPAAPPAPGYGL. The fork-head DNA-binding region spans 124-218; sequence RPPYSYSSLI…DNGNFRRKRK (95 aa). The interval 224–254 is disordered; sequence VGAGFDEESNEDKKPLALKSLGPDSPGGASV.

The protein resides in the nucleus. Its function is as follows. Possible transcriptional activator. The polypeptide is Forkhead box protein I2-B (foxi2-b) (Xenopus laevis (African clawed frog)).